The primary structure comprises 552 residues: Steroid transmembrane transporter SLC22A24 (552 aa).

A run of 12 helical transmembrane segments spans residues 16–36 (FQIL…THIL), 144–164 (LKSV…LMFG), 175–197 (IYTW…PTFV), 201–220 (IFRF…AFIL), 232–252 (IGIT…GGLA), 255–275 (IRDW…LSLL), 349–369 (IICF…GLIL), 371–391 (LQDL…ITFI), 407–427 (INQS…TFLS), 435–455 (VVLA…FFVH), 474–494 (VFSR…VYSP), and 496–516 (LPWV…FCLP).

Belongs to the major facilitator (TC 2.A.1) superfamily. Organic cation transporter (TC 2.A.1.19) family.

The protein resides in the cell membrane. It carries out the reaction estrone 3-sulfate(out) + glutarate(in) = estrone 3-sulfate(in) + glutarate(out). The catalysed reaction is 17beta-estradiol 17-O-(beta-D-glucuronate)(out) + glutarate(in) = 17beta-estradiol 17-O-(beta-D-glucuronate)(in) + glutarate(out). It catalyses the reaction taurocholate(out) + glutarate(in) = taurocholate(in) + glutarate(out). The enzyme catalyses 5alpha-androstane-3alpha,17beta-diol 3-O-(beta-D-glucuronate)(out) + glutarate(in) = 5alpha-androstane-3alpha,17beta-diol 3-O-(beta-D-glucuronate)(in) + glutarate(out). It carries out the reaction glycocholate(out) + glutarate(in) = glycocholate(in) + glutarate(out). The catalysed reaction is dehydroepiandrosterone 3-sulfate(out) + glutarate(in) = dehydroepiandrosterone 3-sulfate(in) + glutarate(out). It catalyses the reaction glutarate(in) + succinate(out) = glutarate(out) + succinate(in). Functionally, renal transmembrane organic anion/dicarboxylate exchanger that participates in the reabsorption of conjugated steroids, as well as bile acids, driven by an outward gradient of dicarboxylates such as glutarate or succinate. Transports androstanediol glucuronide (5alpha-androstane-3alpha,17beta-diol 3-O-(beta-D-glucuronate)), estrone 3-sulfate, and estradiol-17-glucuronide (17beta-estradiol 17-O-(beta-D-glucuronate)), and taurocholate. The chain is Steroid transmembrane transporter SLC22A24 from Oryctolagus cuniculus (Rabbit).